The sequence spans 329 residues: Mas-related G-protein coupled receptor member X2 (329 aa).

Residues M1–P33 lie on the Extracellular side of the membrane. The helical transmembrane segment at V34–L54 threads the bilayer. Residues L55 to A63 lie on the Cytoplasmic side of the membrane. Residues F64–I84 form a helical membrane-spanning segment. Over N85–S96 the chain is Extracellular. A helical membrane pass occupies residues I97–L117. The Cytoplasmic portion of the chain corresponds to S118–H144. A helical transmembrane segment spans residues L145–G165. Topologically, residues K166–D184 are extracellular. Residues F185–L205 traverse the membrane as a helical segment. The Cytoplasmic portion of the chain corresponds to L206–T228. Residues V229–F249 form a helical membrane-spanning segment. Residues W250 to S263 are Extracellular-facing. Residues V264–F284 form a helical membrane-spanning segment. Topologically, residues R285–V329 are cytoplasmic.

This sequence belongs to the G-protein coupled receptor 1 family. Mas subfamily.

Its subcellular location is the cell membrane. Functionally, mast cell-specific receptor for basic secretagogues, i.e. cationic amphiphilic drugs, as well as endo- or exogenous peptides, consisting of a basic head group and a hydrophobic core. Recognizes and binds small molecules containing a cyclized tetrahydroisoquinoline (THIQ), such as non-steroidal neuromuscular blocking drugs (NMBDs), including tubocurarine and atracurium. In response to these compounds, mediates pseudo-allergic reactions characterized by histamine release, inflammation and airway contraction. This Hoolock hoolock (Western hoolock gibbon) protein is Mas-related G-protein coupled receptor member X2 (MRGPRX2).